The primary structure comprises 261 residues: Guanine nucleotide exchange factor BopE (261 aa).

Belongs to the GEF (guanine exchange factor) SopE family. As to quaternary structure, monomer. Interacts with human CDC42.

It localises to the secreted. In terms of biological role, activator for both CDC42 and RAC1 by directly interacting with these Rho GTPases and acting as a guanine nucleotide exchange factor (GEF). This activation results in actin cytoskeleton rearrangements and stimulates membrane ruffling, thus promoting bacterial entry into non-phagocytic cells. The chain is Guanine nucleotide exchange factor BopE (bopE) from Burkholderia mallei (strain NCTC 10247).